The sequence spans 265 residues: MSSSCFCKHSEETPLSVLSPELQEQFSDPNHPANLICELCRLFYDNNWVTGTGGGISIRDVDGANPNLVYIAPSGVQKERIQPWEMFLVELPEEKILRTPNDIPKELTKSYKYKPSACTPLFMSCYTMRDAGACIHTHSQHAVMVTLFLEGKKEFEISHIEQIKALPKLALNENTGKIEKIGSMEYYDKLVIPIIENTPHEEDLTDSLQEAIKNYPGTSAVLVRRHGIYVWGETVWKAKVYNEAIDYLLELAVKMQQSGIPTVKQ.

Cys-118 lines the substrate pocket. Zn(2+) contacts are provided by His-136 and His-138. Glu-161 acts as the Proton donor/acceptor in catalysis. Residue His-226 participates in Zn(2+) binding.

It belongs to the aldolase class II family. MtnB subfamily. Zn(2+) is required as a cofactor.

The protein resides in the cytoplasm. It carries out the reaction 5-(methylsulfanyl)-D-ribulose 1-phosphate = 5-methylsulfanyl-2,3-dioxopentyl phosphate + H2O. It functions in the pathway amino-acid biosynthesis; L-methionine biosynthesis via salvage pathway; L-methionine from S-methyl-5-thio-alpha-D-ribose 1-phosphate: step 2/6. In terms of biological role, catalyzes the dehydration of methylthioribulose-1-phosphate (MTRu-1-P) into 2,3-diketo-5-methylthiopentyl-1-phosphate (DK-MTP-1-P). The protein is Methylthioribulose-1-phosphate dehydratase of Scheffersomyces stipitis (strain ATCC 58785 / CBS 6054 / NBRC 10063 / NRRL Y-11545) (Yeast).